The chain runs to 349 residues: Glycerol-3-phosphate dehydrogenase [NAD(+)], cytoplasmic (349 aa).

10 to 15 (GSGNWG) is a binding site for NAD(+). Residue Lys-120 participates in substrate binding. Ala-153 contacts NAD(+). Ser-154 carries the post-translational modification Phosphoserine. Lys-204 functions as the Proton acceptor in the catalytic mechanism. Arg-269 contributes to the NAD(+) binding site. 269-270 (RN) contacts substrate. Lys-289 is modified (N6-succinyllysine). Residues Lys-296 and Gln-298 each contribute to the NAD(+) site. Tyr-326 is subject to Phosphotyrosine.

It belongs to the NAD-dependent glycerol-3-phosphate dehydrogenase family. As to quaternary structure, homodimer.

It is found in the cytoplasm. It catalyses the reaction sn-glycerol 3-phosphate + NAD(+) = dihydroxyacetone phosphate + NADH + H(+). Functionally, has glycerol-3-phosphate dehydrogenase activity. The protein is Glycerol-3-phosphate dehydrogenase [NAD(+)], cytoplasmic of Rattus norvegicus (Rat).